We begin with the raw amino-acid sequence, 91 residues long: MKPNIHPDNYRTVLFFDSSANEGWLIRSCAETHGKTMVWTDGKEYPLFSLDTSSASHPVYTGKQRNVNTEGRASKFNQRFQSVMSSFRKDK.

It belongs to the bacterial ribosomal protein bL31 family. Type B subfamily. In terms of assembly, part of the 50S ribosomal subunit.

The chain is Large ribosomal subunit protein bL31B from Neisseria meningitidis serogroup B (strain ATCC BAA-335 / MC58).